A 560-amino-acid chain; its full sequence is Choline/ethanolamine transporter FLVCR1 (560 aa).

A disordered region spans residues 1-43 (MARPDDEVGPAVAPGHPLGKGYLPVPKGAPDGEARLVPQNGPE). The Cytoplasmic portion of the chain corresponds to 1–92 (MARPDDEVGP…EDVPCPACPP (92 aa)). A helical membrane pass occupies residues 93 to 117 (RTALSPRRFVVLLIFSLYSLVNAFQ). Over 118-135 (WIQYSSISNVFEDFYEVS) the chain is Extracellular. The chain crosses the membrane as a helical span at residues 136-163 (PLHINWLSMVYMVAYVPLIFPATWLLDT). Topologically, residues 164-165 (RG) are cytoplasmic. Residues 166–185 (LRLTALLGSGLNCLGAWVKC) traverse the membrane as a helical segment. The Extracellular segment spans residues 186-192 (GSVQRHL). The chain crosses the membrane as a helical span at residues 193 to 221 (FWVTMLGQILCSVAQVFILGLPSPVASVW). Gln207 is a binding site for ethanolamine. The Cytoplasmic segment spans residues 222–226 (FGPKE). A helical transmembrane segment spans residues 227–252 (VSTACATAVLGNQLGTAVGFLLPPVL). The Extracellular segment spans residues 253 to 270 (VPALGTQNSTGLLAHTQN). A glycan (N-linked (GlcNAc...) asparagine) is linked at Asn270. A helical membrane pass occupies residues 271–300 (NTDLLAHNINTMFYGTAFISTFLFFLTIIA). At 301–336 (FKEKPPLPPSQAQAVLRDSPPEEYSYKSSIWNLCRN) the chain is on the cytoplasmic side. A helical transmembrane segment spans residues 337 to 367 (IPFVLLLVSYGIMTGAFYSISTLLNQIILTY). The Extracellular portion of the chain corresponds to 368 to 371 (YVGE). The helical transmembrane segment at 372–400 (EVNAGRIGLTLVVAGMVGSILCGLWLDYT) threads the bilayer. Over 401–402 (KT) the chain is Cytoplasmic. Residues 403-425 (YKQTTLIVYVLSFIGMLIFTFTL) form a helical membrane-spanning segment. Topologically, residues 426–428 (NLG) are extracellular. The helical transmembrane segment at 429–458 (YIIVVFFTGGILGFFMTGYLPLGFEFAVEI) threads the bilayer. Topologically, residues 459–466 (TYPESEGM) are cytoplasmic. Residues 467–492 (SSGLLNTAAQILGIFFTLAQGKITTD) form a helical membrane-spanning segment. Gln476 serves as a coordination point for ethanolamine. Position 476 (Gln476) interacts with choline. Residues 493-495 (YNS) lie on the Extracellular side of the membrane. A helical transmembrane segment spans residues 496 to 518 (PEAGNIFLCAWMFVGIILTALIK). Residues 519–560 (SDLRRHNINTGLTNIDVKAVPVDSRVDPKPKVMVSIQSESSL) are Cytoplasmic-facing. Residue Ser542 is modified to Phosphoserine.

It belongs to the major facilitator superfamily. Feline leukemia virus subgroup C receptor (TC 2.A.1.28.1) family.

It localises to the cell membrane. The protein resides in the mitochondrion membrane. The catalysed reaction is choline(out) = choline(in). The enzyme catalyses ethanolamine(in) = ethanolamine(out). It carries out the reaction heme b(in) = heme b(out). In terms of biological role, uniporter that mediates the transport of extracellular choline and ethanolamine into cells, thereby playing a key role in phospholipid biosynthesis. Choline and ethanolamine are the precursors of phosphatidylcholine and phosphatidylethanolamine, respectively, the two most abundant phospholipids. Transport is not coupled with proton transport and is exclusively driven by the choline (or ethanolamine) gradient across the plasma membrane. Also acts as a heme b transporter that mediates heme efflux from the cytoplasm to the extracellular compartment. Uniporter that mediates the transport of extracellular choline and ethanolamine into cells. Choline and ethanolamine are the precursors of phosphatidylcholine and phosphatidylethanolamine, respectively, the two most abundant phospholipids. Transport is not coupled with proton transport and is exclusively driven by the choline (or ethanolamine) gradient across the plasma membrane. Also acts as a heme b transporter that mediates heme efflux from the cytoplasm to the extracellular compartment. Heme export depends on the presence of HPX and is required to maintain intracellular free heme balance, protecting cells from heme toxicity. Heme export provides protection from heme or ferrous iron toxicities in liver, brain, sensory neurons and during erythropoiesis, a process in which heme synthesis intensifies. Possibly export coproporphyrin and protoporphyrin IX, which are both intermediate products in the heme biosynthetic pathway. Does not export bilirubin. The molecular mechanism of heme transport, whether electrogenic, electroneutral or coupled to other ions, remains to be elucidated. Its function is as follows. Heme transporter that promotes heme efflux from the mitochondrion to the cytoplasm. Essential for erythroid differentiation. The sequence is that of Choline/ethanolamine transporter FLVCR1 (Flvcr1) from Mus musculus (Mouse).